A 1125-amino-acid polypeptide reads, in one-letter code: Transcription-repair-coupling factor (1125 aa).

The region spanning 597 to 758 (DMMSFKVMDR…LIKLRDISVL (162 aa)) is the Helicase ATP-binding domain. Position 610 to 617 (610 to 617 (GDVGFGKT)) interacts with ATP. The DEEQ box motif lies at 711–714 (DEEQ). The 160-residue stretch at 774–933 (SFSELLIKHA…GFKIAMKDME (160 aa)) folds into the Helicase C-terminal domain.

In the N-terminal section; belongs to the UvrB family. The protein in the C-terminal section; belongs to the helicase family. RecG subfamily.

The protein localises to the cytoplasm. In terms of biological role, couples transcription and DNA repair by recognizing RNA polymerase (RNAP) stalled at DNA lesions. Mediates ATP-dependent release of RNAP and its truncated transcript from the DNA, and recruitment of nucleotide excision repair machinery to the damaged site. The protein is Transcription-repair-coupling factor of Borreliella burgdorferi (strain ATCC 35210 / DSM 4680 / CIP 102532 / B31) (Borrelia burgdorferi).